A 389-amino-acid chain; its full sequence is GTPase Obg (389 aa).

In terms of domain architecture, Obg spans 1–159 (MKFVDEAVIK…RELRLELLLL (159 aa)). The region spanning 160–333 (ADVGMLGLPN…LCYKLADFME (174 aa)) is the OBG-type G domain. GTP is bound by residues 166–173 (GLPNAGKS), 191–195 (FTTLI), 213–216 (DIPG), 283–286 (NKVD), and 314–316 (SAV). Residues serine 173 and threonine 193 each coordinate Mg(2+). A disordered region spans residues 359-389 (NQGEVITEDDDDDWDDWDDEEDDGHVIYVRE). Over residues 364-381 (ITEDDDDDWDDWDDEEDD) the composition is skewed to acidic residues.

The protein belongs to the TRAFAC class OBG-HflX-like GTPase superfamily. OBG GTPase family. In terms of assembly, monomer. Requires Mg(2+) as cofactor.

Its subcellular location is the cytoplasm. In terms of biological role, an essential GTPase which binds GTP, GDP and possibly (p)ppGpp with moderate affinity, with high nucleotide exchange rates and a fairly low GTP hydrolysis rate. Plays a role in control of the cell cycle, stress response, ribosome biogenesis and in those bacteria that undergo differentiation, in morphogenesis control. The polypeptide is GTPase Obg (Vibrio vulnificus (strain CMCP6)).